Reading from the N-terminus, the 602-residue chain is MATRIKILPENLTNKIAAGEVVERPASVVKELVENALDAGCSEVVVEIEAGGRRLIKVTDSGCGMTREDALLALERHATSKIASDSDLFGLATLGFRGEALPSIASVSRFALATREKGAIEGTEIYAEGGRVKEVKVCGMAEGTVISVRNLFFNTPARLKFMKSSDTEAGHVGDLLTKLAISRPDVRFIYNNDGRTIFRALDADLRERVATLLGRALSADLYPLDFHDGPLGVTGLIAKPECSRSAASHLYTYINGRFIKDKVVQHAVLQAYRNFMERGRYPVVVLFITVPADEVDVNVHPTKHEVRFREQGRVHDAIQAALESVLRATPWVRKQAAPQPFASPPPASEASATRVAEVRETLARYSPEKHLQQSFTVPPAATFQRQQGAVSLPVAAREDDTASDKTESKGYYCSLSVIGQFNAAYILCQDGTDLVIIDQHAAHERVAFEKLKAQFAAAQVESQRLLFPETIELSFKEGATLREHLAELGRLGFSLEEFGGATWLLNAVPRLLSGTDYLRTLRDILEELQTLGRSRTFADALEEILSRIACHSVVRGIHPLNGQEISALFAQMDATEFSSNCPHGRPVLRSLTLPEIERMFKR.

This sequence belongs to the DNA mismatch repair MutL/HexB family.

Functionally, this protein is involved in the repair of mismatches in DNA. It is required for dam-dependent methyl-directed DNA mismatch repair. May act as a 'molecular matchmaker', a protein that promotes the formation of a stable complex between two or more DNA-binding proteins in an ATP-dependent manner without itself being part of a final effector complex. The sequence is that of DNA mismatch repair protein MutL from Geotalea uraniireducens (strain Rf4) (Geobacter uraniireducens).